Here is a 761-residue protein sequence, read N- to C-terminus: Complement factor B (761 aa).

The N-terminal stretch at 1 to 22 is a signal peptide; that stretch reads MESPQLCLVLLVLGFSSGGVSA. 3 Sushi domains span residues 32 to 97, 98 to 157, and 160 to 217; these read VSCS…ECRA, IRCP…ICDD, and GYCP…SCQD. Disulfide bonds link C34-C73, C59-C95, C100-C142, C128-C155, C162-C202, and C188-C215. N119 and N139 each carry an N-linked (GlcNAc...) asparagine glycan. Residues 267–466 form the VWFA domain; sequence NIYLVLDGSD…DLENVFYQMI (200 aa). 2 residues coordinate Mg(2+): S275 and S277. N-linked (GlcNAc...) asparagine glycosylation occurs at N282. T350 is a binding site for Mg(2+). An N-linked (GlcNAc...) asparagine glycan is attached at N375. In terms of domain architecture, Peptidase S1 spans 474 to 754; the sequence is LCGMVWEHKK…VLPWLKDKLK (281 aa). Intrachain disulfides connect C475–C593, C508–C524, C596–C612, C653–C679, and C692–C722. Residues H523 and D573 each act as charge relay system in the active site. S696 functions as the Charge relay system in the catalytic mechanism.

Belongs to the peptidase S1 family. In terms of assembly, monomer. Interacts with complement C3b; this interaction is dependent on the presence of Mg(2+). Catalytic component of the C3 convertase of the alternative complement pathway, also named C3bBb, composed of complement factor B Bb and complement C3b. Catalytic component of the C5 convertase of the alternative complement pathway, also named C3bBb3b, composed of complement factor B Bb and additional molecules of complement C3b. Interacts to CFP; this interaction contributes to the stabilization of the active C3-convertase enzyme complex. Mg(2+) serves as cofactor. The cofactor is Mn(2+). In terms of processing, cleaved by CFD following activation of the alternative complement system, generating Ba and Bb chains. Cleavage and activation takes place when CFB is already associated with complement C3b.

The protein resides in the secreted. Its subcellular location is the cell surface. The enzyme catalyses Cleavage of Arg-|-Ser bond in complement component C3 alpha-chain to yield C3a and C3b, and Arg-|-Xaa bond in complement component C5 alpha-chain to yield C5a and C5b.. Precursor of the catalytic component of the C3 and C5 convertase complexes of the alternative pathway of the complement system, a cascade of proteins that leads to phagocytosis and breakdown of pathogens and signaling that strengthens the adaptive immune system. The alternative complement pathway acts as an amplification loop that enhances other complement pathways (classical, lectin and GZMK) by promoting formation of additional C3 and C5 convertases. CFB is cleaved and activated by CFD to generate Ba and Bb chains; Bb chain constituting the catalytic component of the C3 and C5 convertases. Its function is as follows. Serine protease component of the complement C3 and C5 convertase complexes of the alternative complement pathway. Following cleavage and activation by factor D (CFD), forms the C3 convertase together with complement C3b. As part of the C3 convertase, cleaves and activates C3 into C3a anaphylatoxin and C3b opsonin, the next components of the complement pathways. When an additional complement C3b molecule binds to the C3 convertase, forms the C5 convertase, which cleaves and activates C5 into C5a anaphylatoxin and C5b component of the membrane attack complex. Functionally, involved in proliferation and differentiation of preactivated B-lymphocytes, rapid spreading of peripheral blood monocytes, stimulation of lymphocyte blastogenesis and lysis of erythrocytes. This is Complement factor B (Cfb) from Mus musculus (Mouse).